Consider the following 207-residue polypeptide: ATP-dependent Clp protease proteolytic subunit (207 aa).

Serine 111 serves as the catalytic Nucleophile. The active site involves histidine 136.

The protein belongs to the peptidase S14 family. In terms of assembly, fourteen ClpP subunits assemble into 2 heptameric rings which stack back to back to give a disk-like structure with a central cavity, resembling the structure of eukaryotic proteasomes.

Its subcellular location is the cytoplasm. The catalysed reaction is Hydrolysis of proteins to small peptides in the presence of ATP and magnesium. alpha-casein is the usual test substrate. In the absence of ATP, only oligopeptides shorter than five residues are hydrolyzed (such as succinyl-Leu-Tyr-|-NHMec, and Leu-Tyr-Leu-|-Tyr-Trp, in which cleavage of the -Tyr-|-Leu- and -Tyr-|-Trp bonds also occurs).. In terms of biological role, cleaves peptides in various proteins in a process that requires ATP hydrolysis. Has a chymotrypsin-like activity. Plays a major role in the degradation of misfolded proteins. This chain is ATP-dependent Clp protease proteolytic subunit, found in Psychromonas ingrahamii (strain DSM 17664 / CCUG 51855 / 37).